The following is a 393-amino-acid chain: Staphopain B (393 aa).

The signal sequence occupies residues 1 to 36 (MNSSCKSRVFNIISIIMVSMLILSLGAFANNNKAKA). Residues 37 to 219 (DSHSKQLEIN…KVEENEAIQE (183 aa)) constitute a propeptide that is removed on maturation. Active-site residues include Cys-243, His-340, and Asn-360.

The protein belongs to the peptidase C47 family. As to quaternary structure, in the cytoplasm, prematurely activated/folded SspB forms a stable non-covalent complex with SspC. In terms of processing, proteolytically cleaved by staphylococcal serine protease (SspA).

The protein resides in the secreted. With respect to regulation, prematurely activated/folded staphopain B is inhibited by staphostatin B (SspC), which is probably required to protect staphylococcal cytoplasmic proteins from degradation by SspB. Also inactivated by E-64 and stimulated by EDTA. Its function is as follows. Cysteine protease that plays an important role in the inhibition of host innate immune response. Degrades host elastin, fibrogen, fibronectin and kininogen. Blocks phagocytosis of opsonised S.aureus by neutrophils and monocytes by inducing their death in a proteolytic activity-dependent manner. Decreases surface expression of the 'don't eat me' signal CD31 on neutrophils. Cleaves host galectin-3/LGALS3, thereby inhibiting the neutrophil-activating ability of the lectin. In Staphylococcus aureus (strain NCTC 8325 / PS 47), this protein is Staphopain B (sspB).